Reading from the N-terminus, the 673-residue chain is Methionine--tRNA ligase (673 aa).

A 'HIGH' region motif is present at residues 13-23 (PYTNGFCHLGH). The Zn(2+) site is built by cysteine 144, cysteine 147, cysteine 156, and cysteine 160. Positions 325 to 329 (KFSKS) match the 'KMSKS' region motif. Residue lysine 328 coordinates ATP. In terms of domain architecture, tRNA-binding spans 575-673 (DVAKLDLRVG…KDVPEGTKVH (99 aa)).

Belongs to the class-I aminoacyl-tRNA synthetase family. MetG type 1 subfamily. As to quaternary structure, homodimer. It depends on Zn(2+) as a cofactor.

The protein resides in the cytoplasm. It catalyses the reaction tRNA(Met) + L-methionine + ATP = L-methionyl-tRNA(Met) + AMP + diphosphate. Its function is as follows. Is required not only for elongation of protein synthesis but also for the initiation of all mRNA translation through initiator tRNA(fMet) aminoacylation. This is Methionine--tRNA ligase from Methanocorpusculum labreanum (strain ATCC 43576 / DSM 4855 / Z).